Consider the following 424-residue polypeptide: Galacturonokinase (424 aa).

Serine 2 carries the post-translational modification N-acetylserine. 146-155 (DSSGLSSSAA) lines the ATP pocket. Aspartate 197 (proton acceptor) is an active-site residue.

It belongs to the GHMP kinase family. It depends on Mg(2+) as a cofactor. The cofactor is Mn(2+). Ca(2+) serves as cofactor. As to expression, expressed in roots, stems, leaves, flowers and young siliques. Higher expression in the elongating middle stem region than in the lower or upper stem region.

It catalyses the reaction D-galacturonate + ATP = 1-phospho-alpha-D-galacturonate + ADP + H(+). Inhibited by EDTA and ADP. Its function is as follows. Sugar-1-kinase with a strict substrate specificity for the alpha-anomeric configuration of D-galacturonic acid (D-GalA) and ATP. Involved in the biosynthesis of UDP-galacturonic acid (UDP-GalA) from the salvaged GalA that is released during growth-dependent cell wall restructuring. The polypeptide is Galacturonokinase (GALAK) (Arabidopsis thaliana (Mouse-ear cress)).